The chain runs to 212 residues: MSPRQQPRRIARELALLSLSQIKGSSDKLEQVELNNLVIAAIRTLSGEVQESLETAAAEVSRSQERLLASETRATNLKSAQTMVTEALELTQNAINRLAAMVEIPEMVQLSSQYEVREYALEIIQTVYRRQTEIEQELATVMVDWQLNRLPKIDRDILRIAVAEMIFLEVPQKVAINEAVEIAKRYSDEEGYRFINGVLRRVTERLKTEARR.

Belongs to the NusB family.

Involved in transcription antitermination. Required for transcription of ribosomal RNA (rRNA) genes. Binds specifically to the boxA antiterminator sequence of the ribosomal RNA (rrn) operons. In Gloeothece citriformis (strain PCC 7424) (Cyanothece sp. (strain PCC 7424)), this protein is Transcription antitermination protein NusB.